The chain runs to 169 residues: Adenine phosphoribosyltransferase (169 aa).

Belongs to the purine/pyrimidine phosphoribosyltransferase family. In terms of assembly, homodimer.

The protein localises to the cytoplasm. The enzyme catalyses AMP + diphosphate = 5-phospho-alpha-D-ribose 1-diphosphate + adenine. Its pathway is purine metabolism; AMP biosynthesis via salvage pathway; AMP from adenine: step 1/1. Functionally, catalyzes a salvage reaction resulting in the formation of AMP, that is energically less costly than de novo synthesis. The sequence is that of Adenine phosphoribosyltransferase from Mycoplasmopsis synoviae (strain 53) (Mycoplasma synoviae).